The sequence spans 351 residues: Porphobilinogen deaminase (351 aa).

An S-(dipyrrolylmethanemethyl)cysteine modification is found at cysteine 242.

This sequence belongs to the HMBS family. As to quaternary structure, monomer. Dipyrromethane serves as cofactor.

The enzyme catalyses 4 porphobilinogen + H2O = hydroxymethylbilane + 4 NH4(+). It functions in the pathway porphyrin-containing compound metabolism; protoporphyrin-IX biosynthesis; coproporphyrinogen-III from 5-aminolevulinate: step 2/4. In terms of biological role, tetrapolymerization of the monopyrrole PBG into the hydroxymethylbilane pre-uroporphyrinogen in several discrete steps. The polypeptide is Porphobilinogen deaminase (Rickettsia peacockii (strain Rustic)).